The primary structure comprises 434 residues: MTKTDIAARVYNHTWKLDPIVRSLIDTDFYKLLMLQMIWKLYPDVDATFSLINRTKSVRLAEVIDEKELREQLDHARTLRLSKKEMIWLAGNSFYGRAQIFEPEFLTWLSNFQLPDYELSKRDGQYVLDFHGSWKETTMWEIPALAIINELRSRTALKALGPFTLDVLYARAKAKMWEKVERLRELPDLHISDFGTRRRHSFLWQRWCVEALKEGVPHAFTGTSNVLLAMDSDLEAVGTNAHELPMVAAALAKTDEELGKAPYKVLRDWNRLYGGNLLVVLPDAFGTASFLRNAPEWVADWTGFRPDSAPPIEGGEKIIDWWKKMGRDPRQKLLIFSDGLDVDAIIATYKHFEGRVRMGFGWGTNLTNDFAGCAPTEIHGLNPISIVCKVIEANGRPAVKLSDNPQKATGEPAEVERYLKFFGAEDRVDHEVLV.

H242 carries the phosphohistidine; by autocatalysis modification.

It belongs to the NAPRTase family. Post-translationally, transiently phosphorylated on a His residue during the reaction cycle. Phosphorylation strongly increases the affinity for substrates and increases the rate of nicotinate D-ribonucleotide production. Dephosphorylation regenerates the low-affinity form of the enzyme, leading to product release.

The enzyme catalyses nicotinate + 5-phospho-alpha-D-ribose 1-diphosphate + ATP + H2O = nicotinate beta-D-ribonucleotide + ADP + phosphate + diphosphate. It participates in cofactor biosynthesis; NAD(+) biosynthesis; nicotinate D-ribonucleotide from nicotinate: step 1/1. Functionally, catalyzes the synthesis of beta-nicotinate D-ribonucleotide from nicotinate and 5-phospho-D-ribose 1-phosphate at the expense of ATP. This Rhizobium rhizogenes (strain K84 / ATCC BAA-868) (Agrobacterium radiobacter) protein is Nicotinate phosphoribosyltransferase.